Here is a 508-residue protein sequence, read N- to C-terminus: Lysine--tRNA ligase (508 aa).

Residues Glu418 and Glu425 each contribute to the Mg(2+) site.

The protein belongs to the class-II aminoacyl-tRNA synthetase family. As to quaternary structure, homodimer. Mg(2+) is required as a cofactor.

It is found in the cytoplasm. The catalysed reaction is tRNA(Lys) + L-lysine + ATP = L-lysyl-tRNA(Lys) + AMP + diphosphate. This Burkholderia ambifaria (strain MC40-6) protein is Lysine--tRNA ligase.